The following is a 248-amino-acid chain: Mitochondrial import inner membrane translocase subunit Tim21 (248 aa).

A mitochondrion-targeting transit peptide spans 1-18 (MICTFLRAVQYTEKLHRS). Residues 67–98 (TQGPSPRKAKEDGSKQVSVHRSQRGGTAVPTS) are disordered. Residues 108–128 (FTYLIVVLFGISITGGLFYTI) traverse the membrane as a helical segment.

This sequence belongs to the TIM21 family. In terms of assembly, component of the TIM23 complex. Component of the MITRAC (mitochondrial translation regulation assembly intermediate of cytochrome c oxidase complex) complex, the core components of this complex being COA3/MITRAC12 and COX14. Interacts with COA3 and MT-CO1/COX1.

The protein resides in the mitochondrion membrane. In terms of biological role, participates in the translocation of transit peptide-containing proteins across the mitochondrial inner membrane. Also required for assembly of mitochondrial respiratory chain complex I and complex IV as component of the MITRAC (mitochondrial translation regulation assembly intermediate of cytochrome c oxidase complex) complex. Probably shuttles between the presequence translocase and respiratory-chain assembly intermediates in a process that promotes incorporation of early nuclear-encoded subunits into these complexes. The sequence is that of Mitochondrial import inner membrane translocase subunit Tim21 (TIMM21) from Homo sapiens (Human).